We begin with the raw amino-acid sequence, 667 residues long: Protein OS-9 (667 aa).

The signal sequence occupies residues M1 to T25. In terms of domain architecture, MRH spans A108 to H230. An intrachain disulfide couples C110 to C123. The a mannooligosaccharide derivative site is built by W117, W118, and Q130. N177 is a glycosylation site (N-linked (GlcNAc...) asparagine). Disulfide bonds link C181–C216 and C196–C228. A mannooligosaccharide derivative contacts are provided by D182, R188, E212, and Y218. Disordered regions lie at residues W284–Q355, L372–L452, L464–E483, L504–R540, and A633–F667. Basic and acidic residues-rich tracts occupy residues T302 to F311 and P396 to E412. Residues M413–E429 are compositionally biased toward acidic residues. Over residues R430–L452 the composition is skewed to basic and acidic residues. Over residues L504–V513 the composition is skewed to basic and acidic residues. Over residues K514–P523 the composition is skewed to basic residues. A compositionally biased stretch (basic and acidic residues) spans A633 to Y647.

This sequence belongs to the OS-9 family. As to quaternary structure, component of the HRD1 complex, which comprises at least SYNV1/HRD1, DERL1/2, FAM8A1, HERPUD1/HERP, OS9, SEL1L and UBE2J1. FAM8A1 is stabilized by interaction with SYNV1, which prevents its proteasomal degradation. OS9 and UBE2J1 recruitment to the complex may be mediated by SEL1L. Through this complex, may interact with ERLEC1 and HSPA5. Interacts (via C-terminus) with CPNE6 (via second C2 domain); this interaction occurs in a calcium-dependent manner in vitro. Interacts with CREB3. Intramolecular disulfide bonds. In terms of processing, isoform 1 and isoform 2 are N-glycosylated. As to expression, ubiquitously expressed. Found as well in all tumor cell lines analyzed, amplified in sarcomas. Highly expressed in osteosarcoma SJSA-1 and rhabdomyosarcoma Rh30 cell lines. Isoform 2 is the major isoform detected in all cell types examined.

It localises to the endoplasmic reticulum lumen. Lectin component of the HRD1 complex, which functions in endoplasmic reticulum (ER) quality control and ER-associated degradation (ERAD). Specifically recognizes and binds improperly folded glycoproteins as well as hyperglycosylated proteins, retain them in the ER, and transfers them to the ubiquitination machinery and promote their degradation. Possible targets include TRPV4 as well as hyperglycosylated HSP90B1. This chain is Protein OS-9 (OS9), found in Homo sapiens (Human).